A 237-amino-acid chain; its full sequence is Orotidine 5'-phosphate decarboxylase (237 aa).

Substrate is bound by residues aspartate 10, lysine 33, 60–69 (DLKLHDIPNT), threonine 123, arginine 185, glutamine 194, glycine 214, and arginine 215. The active-site Proton donor is lysine 62.

The protein belongs to the OMP decarboxylase family. Type 1 subfamily. In terms of assembly, homodimer.

It carries out the reaction orotidine 5'-phosphate + H(+) = UMP + CO2. It participates in pyrimidine metabolism; UMP biosynthesis via de novo pathway; UMP from orotate: step 2/2. Catalyzes the decarboxylation of orotidine 5'-monophosphate (OMP) to uridine 5'-monophosphate (UMP). The protein is Orotidine 5'-phosphate decarboxylase of Enterococcus faecalis (strain ATCC 700802 / V583).